The sequence spans 319 residues: Ninja-family protein AFP4 (319 aa).

A compositionally biased stretch (basic and acidic residues) spans 39 to 54; that stretch reads DSEHGENQQEAKKRED. Disordered regions lie at residues 39-63, 99-120, and 205-228; these read DSEH…EKDV, FVFD…IVGR, and VTGP…NVEN.

Belongs to the Ninja family. Interacts with ABI5/DPBF1, AREB3/DPBF3, EEL/DPBF4, ABF1 and ABF3/DPBF5. Predominantly expressed in roots and seedlings.

The protein localises to the nucleus. In terms of biological role, acts as a negative regulator of abscisic acid (ABA) and salinity responses. The sequence is that of Ninja-family protein AFP4 (AFP4) from Arabidopsis thaliana (Mouse-ear cress).